The following is a 92-amino-acid chain: Large ribosomal subunit protein bL28 (92 aa).

This sequence belongs to the bacterial ribosomal protein bL28 family.

In Borreliella burgdorferi (strain ATCC 35210 / DSM 4680 / CIP 102532 / B31) (Borrelia burgdorferi), this protein is Large ribosomal subunit protein bL28.